The primary structure comprises 548 residues: Chaperonin GroEL (548 aa).

ATP contacts are provided by residues 30 to 33 (TLGP), Lys51, 87 to 91 (DGTTT), Gly415, 479 to 481 (NAA), and Asp495.

The protein belongs to the chaperonin (HSP60) family. In terms of assembly, forms a cylinder of 14 subunits composed of two heptameric rings stacked back-to-back. Interacts with the co-chaperonin GroES.

The protein localises to the cytoplasm. The enzyme catalyses ATP + H2O + a folded polypeptide = ADP + phosphate + an unfolded polypeptide.. Its function is as follows. Together with its co-chaperonin GroES, plays an essential role in assisting protein folding. The GroEL-GroES system forms a nano-cage that allows encapsulation of the non-native substrate proteins and provides a physical environment optimized to promote and accelerate protein folding. This chain is Chaperonin GroEL, found in Pectobacterium carotovorum subsp. carotovorum (strain PC1).